The following is a 101-amino-acid chain: uncharacterized protein (101 aa).

The signal sequence occupies residues 1 to 25 (MRKKRLLSRISFSSLFLLCGTLLSA). Residue Cys-26 is the site of N-palmitoyl cysteine attachment. Cys-26 is lipidated: S-diacylglycerol cysteine.

This sequence belongs to the MG439/MG440 family.

The protein resides in the cell membrane. This is an uncharacterized protein from Mycoplasma pneumoniae (strain ATCC 29342 / M129 / Subtype 1) (Mycoplasmoides pneumoniae).